The following is a 530-amino-acid chain: Autoinducer-2 kinase (530 aa).

Belongs to the FGGY kinase family.

It localises to the cytoplasm. It catalyses the reaction (S)-4,5-dihydroxypentane-2,3-dione + ATP = (2S)-2-hydroxy-3,4-dioxopentyl phosphate + ADP + H(+). In terms of biological role, catalyzes the phosphorylation of autoinducer-2 (AI-2) to phospho-AI-2, which subsequently inactivates the transcriptional regulator LsrR and leads to the transcription of the lsr operon. Phosphorylates the ring-open form of (S)-4,5-dihydroxypentane-2,3-dione (DPD), which is the precursor to all AI-2 signaling molecules, at the C5 position. The protein is Autoinducer-2 kinase of Salmonella paratyphi A (strain ATCC 9150 / SARB42).